The chain runs to 406 residues: Mitochondrial intermembrane space import and assembly protein 40 (406 aa).

A mitochondrion-targeting transit peptide spans 1-23 (MFRVSLQATRRVAFRSARQIRFY). The Mitochondrial matrix segment spans residues 24 to 37 (SAHPPSGGVSHMNK). Residues 38 to 54 (PALLLAGFSTLGAIYVA) traverse the membrane as a helical; Signal-anchor for type II membrane protein segment. The Mitochondrial intermembrane portion of the chain corresponds to 55–406 (DGCPTLIERK…AVTNTDDEKK (352 aa)). Disordered regions lie at residues 67–110 (PAEK…TTPE) and 142–276 (VNEQ…PETG). The segment covering 205–224 (ASKDGSEGESDVVLHEKSPA) has biased composition (basic and acidic residues). Low complexity predominate over residues 242-260 (SGGTAEQSATAAAAAAGVQ). Cystine bridges form between Cys282–Cys284, Cys293–Cys326, and Cys303–Cys316. The CHCH domain maps to 290-334 (YGPCGEEFKSAFSCFVYSEADPKGINCVEKFSTMQNCFRKYPDYY). 2 short sequence motifs (cx9C motif) span residues 293 to 303 (CGEEFKSAFSC) and 316 to 326 (CVEKFSTMQNC). Disordered stretches follow at residues 341–365 (EEEA…ATST) and 384–406 (EENP…DEKK). The segment covering 356-365 (TTPVSTATST) has biased composition (low complexity). The span at 384-393 (EENPQLKDTP) shows a compositional bias: basic and acidic residues.

As to quaternary structure, monomer. Cu(2+) is required as a cofactor. It depends on Zn(2+) as a cofactor.

The protein resides in the mitochondrion inner membrane. Required for the import and folding of small cysteine-containing proteins (small Tim) in the mitochondrial intermembrane space (IMS). Forms a redox cycle with ERV1 that involves a disulfide relay system. Precursor proteins to be imported into the IMS are translocated in their reduced form into the mitochondria. The oxidized form of MIA40 forms a transient intermolecular disulfide bridge with the reduced precursor protein, resulting in oxidation of the precursor protein that now contains an intramolecular disulfide bond and is able to undergo folding in the IMS. This is Mitochondrial intermembrane space import and assembly protein 40 (MIA40) from Kluyveromyces lactis (strain ATCC 8585 / CBS 2359 / DSM 70799 / NBRC 1267 / NRRL Y-1140 / WM37) (Yeast).